Consider the following 350-residue polypeptide: Phosphotriesterase-related protein (350 aa).

A divalent metal cation is bound by residues His22, His24, Glu169, His201, His230, and Asp298.

It belongs to the metallo-dependent hydrolases superfamily. Phosphotriesterase family. Requires a divalent metal cation as cofactor.

The chain is Phosphotriesterase-related protein from Drosophila sechellia (Fruit fly).